The sequence spans 460 residues: MVKEYKTITQIAGPLIFVEKTEPVGYNEIVNIKMTDGTVRRGQVLDSSSDIVVVQVFEGTGGLDKDCGVIFTGETLKLPASIDLLGRILSGSGDPRDGGPRIVPDQLLDINGAAMNPYARLPPKDFIQTGISTIDGTNTLVRGQKLPIFSASGLPHNEIALQIARQASVPGSESAFAVVFAAMGITNEEAQYFMSDFEKTGALERAVVFLNLADDPAVERIVTPRMALTAAEYLAYEHGMHVLVILTDITNYAEALRQMGAARNEVPGRRGYPGYMYTDLATLYERAGIVKGAKGSVTQIPILSMPGDDITHPIPDLSGYITEGQIVVARELHRKGIYPPINVLPSLSRLMNSGIGPGKTREDHKAVSDQMYAGYAEGRDLRGLVAIVGKEALSERDTKFLEFADLFEDKFVRQGRNENRTIEDTLEIGWQILTHLPENQLGRIDNKYIQKYHPAHRKAK.

This sequence belongs to the ATPase alpha/beta chains family. As to quaternary structure, has multiple subunits with at least A(3), B(3), C, D, E, F, H, I and proteolipid K(x).

The protein localises to the cell membrane. Component of the A-type ATP synthase that produces ATP from ADP in the presence of a proton gradient across the membrane. The B chain is a regulatory subunit. The protein is A-type ATP synthase subunit B of Methanosarcina acetivorans (strain ATCC 35395 / DSM 2834 / JCM 12185 / C2A).